A 308-amino-acid polypeptide reads, in one-letter code: MTTKPRHPEKVNKPLNPIKKKPDWIRSKLVNSKEFFLTKTIVNNNNLVTVCQEANCPNITECWSKRHATFMIMGDTCTRACAFCDVKTGRPGKLDSLEPVKIAEAVKKLNLKHVVITSVDRDDLDDGGSNHFFEVIDQTRKRNPNTSIEVLTPDFLRKGDAYKKVLEANPDVFNHNIETVPRLYLKVRPGSRYFSSLELLKNAKLVNKNVFTKSGLMVGLGENKEEIIQVMDDLKAADVDFLTIGQYLQPSVRHHPLDRYYHPDEFKELETIAKSKGFLLVSSTPLTRSSYHADEDFAKLQLNRINNH.

Residues Cys-51, Cys-56, Cys-62, Cys-77, Cys-81, Cys-84, and Ser-290 each contribute to the [4Fe-4S] cluster site. Positions 63–279 (WSKRHATFMI…ETIAKSKGFL (217 aa)) constitute a Radical SAM core domain.

The protein belongs to the radical SAM superfamily. Lipoyl synthase family. The cofactor is [4Fe-4S] cluster.

Its subcellular location is the cytoplasm. The enzyme catalyses [[Fe-S] cluster scaffold protein carrying a second [4Fe-4S](2+) cluster] + N(6)-octanoyl-L-lysyl-[protein] + 2 oxidized [2Fe-2S]-[ferredoxin] + 2 S-adenosyl-L-methionine + 4 H(+) = [[Fe-S] cluster scaffold protein] + N(6)-[(R)-dihydrolipoyl]-L-lysyl-[protein] + 4 Fe(3+) + 2 hydrogen sulfide + 2 5'-deoxyadenosine + 2 L-methionine + 2 reduced [2Fe-2S]-[ferredoxin]. Its pathway is protein modification; protein lipoylation via endogenous pathway; protein N(6)-(lipoyl)lysine from octanoyl-[acyl-carrier-protein]: step 2/2. In terms of biological role, catalyzes the radical-mediated insertion of two sulfur atoms into the C-6 and C-8 positions of the octanoyl moiety bound to the lipoyl domains of lipoate-dependent enzymes, thereby converting the octanoylated domains into lipoylated derivatives. This is Lipoyl synthase from Pelagibacter ubique (strain HTCC1062).